The sequence spans 41 residues: Competence-stimulating peptide type 2 (41 aa).

Residues 1 to 24 constitute a propeptide that is removed on maturation; the sequence is MKNTVKLEQFVALKEKDLQKIKGG.

Belongs to the ComC family.

It is found in the secreted. Acts as a pheromone, induces cells to develop competence for genetic transformation. This chain is Competence-stimulating peptide type 2 (comC2), found in Streptococcus pneumoniae serotype 4 (strain ATCC BAA-334 / TIGR4).